We begin with the raw amino-acid sequence, 188 residues long: Pyridoxal 5'-phosphate synthase subunit PdxT (188 aa).

Position 46–48 (46–48) interacts with L-glutamine; the sequence is GES. Cys78 functions as the Nucleophile in the catalytic mechanism. Residues Arg105 and 134-135 each bind L-glutamine; that span reads IR. Catalysis depends on charge relay system residues His170 and Glu172.

This sequence belongs to the glutaminase PdxT/SNO family. In the presence of PdxS, forms a dodecamer of heterodimers. Only shows activity in the heterodimer.

The catalysed reaction is aldehydo-D-ribose 5-phosphate + D-glyceraldehyde 3-phosphate + L-glutamine = pyridoxal 5'-phosphate + L-glutamate + phosphate + 3 H2O + H(+). The enzyme catalyses L-glutamine + H2O = L-glutamate + NH4(+). Its pathway is cofactor biosynthesis; pyridoxal 5'-phosphate biosynthesis. Catalyzes the hydrolysis of glutamine to glutamate and ammonia as part of the biosynthesis of pyridoxal 5'-phosphate. The resulting ammonia molecule is channeled to the active site of PdxS. The chain is Pyridoxal 5'-phosphate synthase subunit PdxT from Thermotoga maritima (strain ATCC 43589 / DSM 3109 / JCM 10099 / NBRC 100826 / MSB8).